The primary structure comprises 427 residues: MTWFIDRRLNGKNKSMVNRQRFLRRYKAQIKQSISEAINKRSVTDVDSGESVSIPTEDISEPMFHQGRGGLRHRVHPGNDHFVQNDRIERPQGGGGGSGSGQGQASQDGEGQDEFVFQISKDEYLDLLFEDLALPNLKQNQQRQLTEYKTHRAGYTANGVPANISVVRSLQNSLARRTAMTAGKRRELHALEENLAIISNSEPAQLLEEERLRKEIAELRAKIERVPFIDTFDLRYKNYEKRPDPSSQAVMFCLMDVSGSMDQSTKDMAKRFYILLYLFLSRTYKNVEVVYIRHHTQAKEVDEHEFFYSQETGGTIVSSALKLMDEVVKERYNPAQWNIYAAQASDGDNWADDSPLCHEILAKKILPVVRYYSYIEITRRAHQTLWREYEHLQSTFDNFAMQHIRDQDDIYPVFRELFHKQNATAKD.

Over residues 79 to 90 the composition is skewed to basic and acidic residues; sequence NDHFVQNDRIER. Residues 79-110 are disordered; that stretch reads NDHFVQNDRIERPQGGGGGSGSGQGQASQDGE. The segment covering 92 to 102 has biased composition (gly residues); it reads QGGGGGSGSGQ.

Belongs to the UPF0229 family.

The polypeptide is UPF0229 protein YeaH (Escherichia coli O127:H6 (strain E2348/69 / EPEC)).